A 705-amino-acid chain; its full sequence is Elongation factor G (705 aa).

Positions 8-290 constitute a tr-type G domain; that stretch reads ERYRNFGIMA…GVVHLLPSPA (283 aa). Residues 17–24, 88–92, and 142–145 contribute to the GTP site; these read AHIDAGKT, DTPGH, and NKMD. The disordered stretch occupies residues 290–309; the sequence is ADRPPVQGIDEDEKEDTRAA.

This sequence belongs to the TRAFAC class translation factor GTPase superfamily. Classic translation factor GTPase family. EF-G/EF-2 subfamily.

Its subcellular location is the cytoplasm. Functionally, catalyzes the GTP-dependent ribosomal translocation step during translation elongation. During this step, the ribosome changes from the pre-translocational (PRE) to the post-translocational (POST) state as the newly formed A-site-bound peptidyl-tRNA and P-site-bound deacylated tRNA move to the P and E sites, respectively. Catalyzes the coordinated movement of the two tRNA molecules, the mRNA and conformational changes in the ribosome. The sequence is that of Elongation factor G from Xanthomonas oryzae pv. oryzae (strain MAFF 311018).